The following is a 560-amino-acid chain: Triacylglyceride transporter MSMEG_3069/MSMEI_2992 (560 aa).

14 helical membrane passes run 16-36 (LAVL…VDIM), 48-68 (QVTP…PLLG), 78-98 (MLIQ…ALSS), 108-128 (IIQG…AADL), 143-163 (AAQE…VWLF), 168-188 (AVFW…HFSL), 200-220 (VDVI…VGLY), 229-249 (VLPS…VAFF), 269-289 (PFLA…VTLV), 307-327 (AFLL…GGWL), 336-356 (VVLI…HWSV), 368-388 (FTLP…GLVI), 411-431 (VVVA…AWGF), and 477-497 (IFLS…LISG). The segment at 362–371 (RHNLGLFTLP) is beta-hairpin. The tract at residues 519 to 560 (IDPYDAGDADDAPTEMLDLPTQVLSAPPSDPGDERPGRHRAP) is disordered.

Belongs to the major facilitator superfamily. P55 (TC 2.A.1.3.34) family.

Its subcellular location is the cell inner membrane. Resistance to ethidium bromide is inhibited by reserpine. Its function is as follows. In association with lipoprotein LprG transports triacyglycerides (TAG) across the inner cell membrane into the periplasm; TAG probably regulates lipid metabolism and growth regulation and plays a structural role in the outer membrane. TAG (and maybe other lipids) enters the central cavity of the P55 transporter from within the cell inner membrane via clefts on the cytoplasmic face of P55 between TM5-TM8 and TM2-TM11. From there the lipid is probably transferred to the hydrophobic cavity of LprG. Confers resistance to ethidium bromide, possibly acting as an efflux pump, requires LprG lipoprotein for normal function. Export of ethidium bromide can be complemented by the equivalent operon from M.tuberculosis (lprG-Rv1410c). Involved in drug susceptibilty, its expression alone partially complements the antibiotic susceptibilty of a double lprG-mfs deletion. Probably does not function as a bona fide drug efflux pump, but instead plays a role in outer membrane biogenesis. Probably required with LprG for normal surface localization of lipoarabinomannan (LAM). The protein is Triacylglyceride transporter MSMEG_3069/MSMEI_2992 of Mycolicibacterium smegmatis (strain ATCC 700084 / mc(2)155) (Mycobacterium smegmatis).